Reading from the N-terminus, the 121-residue chain is Large ribosomal subunit protein bL19 (121 aa).

It belongs to the bacterial ribosomal protein bL19 family.

This protein is located at the 30S-50S ribosomal subunit interface and may play a role in the structure and function of the aminoacyl-tRNA binding site. In Polaromonas sp. (strain JS666 / ATCC BAA-500), this protein is Large ribosomal subunit protein bL19.